A 285-amino-acid chain; its full sequence is MLRIAVPNKGSLSGPAGEMLHEAGYQQRRESKELRIVDPVNEVEFFYLRPRDIAIYVSSGKLDIGITGRDLLVDSGAHAEEILPLGFARSTFRFAGKPGAATGIDDLKGRTVATSYEGIVAAHLADRGVDASVVHLDGAVETAIELGVAEVIADVVETGTSLRNAGLEVFGEPIMKSEAVVIRRSDAEPDETTEPKVQQFLRRLQGVLVARTYVMMDYDCRVEQLEKAVALTPGLESPTVSPLHNEGWVAVRAMVPAKEAQRIMDDLYEIGARAILTTAIHACRL.

The protein belongs to the ATP phosphoribosyltransferase family. Long subfamily. Requires Mg(2+) as cofactor.

The protein resides in the cytoplasm. It catalyses the reaction 1-(5-phospho-beta-D-ribosyl)-ATP + diphosphate = 5-phospho-alpha-D-ribose 1-diphosphate + ATP. It functions in the pathway amino-acid biosynthesis; L-histidine biosynthesis; L-histidine from 5-phospho-alpha-D-ribose 1-diphosphate: step 1/9. Feedback inhibited by histidine. Functionally, catalyzes the condensation of ATP and 5-phosphoribose 1-diphosphate to form N'-(5'-phosphoribosyl)-ATP (PR-ATP). Has a crucial role in the pathway because the rate of histidine biosynthesis seems to be controlled primarily by regulation of HisG enzymatic activity. This is ATP phosphoribosyltransferase from Streptomyces coelicolor (strain ATCC BAA-471 / A3(2) / M145).